We begin with the raw amino-acid sequence, 36 residues long: Photosystem I reaction center subunit VIII (36 aa).

The chain crosses the membrane as a helical span at residues Pro-7–Tyr-29.

Belongs to the PsaI family.

The protein localises to the plastid. The protein resides in the chloroplast thylakoid membrane. Its function is as follows. May help in the organization of the PsaL subunit. The chain is Photosystem I reaction center subunit VIII from Anthoceros angustus (Hornwort).